The following is a 770-amino-acid chain: MADKITDEYAVGIDPEIYANNPAYSSLFNPYIHKQTIIADHVSVQCHIDLNGIDAVGSKFGNLNAHAGNFTSLCAPNCLPERFALVAYTVEYAFLHDDETDNAADQEALLLENKMLHQALNQSGMTSVSTRVSDKAQRKSEVQAKIAAEYLRLDPVFGEWFLNKWQTFTACVKDVRSLEFPSLDDYLEFRIVDAAADWTLYNFRWGSGITLTPEEEKLADPMSYVAYAELCLVNDLFSWDKEYASHIKSNGDVPLVNAVHIVAVTQGLTHCAAKAVVQAEVRAHEERFCQLKEQYEATDKPSHEVLRWLRLLEHSMAGNWVWSLCVPRYCKVDRNPYKDHLEKYGSDAVRVLTPLDRLCWSKQEIKEMKRNQLKEPSSSTYKTHFSPLEPNPGPEQTRLTISQTQQQRPVLNPYTYINSLPSKNVRQTLIAALNSWYKVPVKSLLIIEGAVNFLHNSSLLLDDIQDGSVLRRGRPVAHQIFGVGQTINTATYLMNEALYLIQMLSPSAVSAYTDEMRNLQLGQGRDLYWSYHTHVPTPAQYISMVDGKTGGLFRLISRLMRSEATKNSDLDISQFATLLGRHFQIRDDYQNLQSEDVTNPHIVSLYAPRANMLLQYTKNKGFCDDLDEGKVSFPVILSMQSPGFSNTALSSVFKGSRKGETLSLEMKQYMLEEITARGAFSETKAVLRKLHTELLSLLMETEKKAGGVENWALRLLIMKLDIVEEKKVAPPKSDSHWGVNQRRAWKGGQKNGRPIDKACFLRAMEEALQK.

The interval 5-335 (ITDEYAVGID…VPRYCKVDRN (331 aa)) is terpene cyclase. The Mg(2+) site is built by Asp97 and Asp101. Substrate contacts are provided by residues Asp97, Asp101, 190–193 (RIVD), Asn234, 238–242 (SWDKE), and 328–329 (RY). The DDXXD 1 motif lies at 97–101 (DDETD). An NSE/DTE motif is present at residues 234 to 242 (NDLFSWDKE). Residues 336 to 720 (PYKDHLEKYG…WALRLLIMKL (385 aa)) form a prenyltransferase region. Residues 371-397 (NQLKEPSSSTYKTHFSPLEPNPGPEQT) are disordered. Positions 374–383 (KEPSSSTYKT) are enriched in polar residues. Isopentenyl diphosphate is bound by residues Lys423, Arg426, and His455. Residues Asp462 and Asp466 each contribute to the Mg(2+) site. The short motif at 462–466 (DDIQD) is the DDXXD 2 element. Arg471 provides a ligand contact to dimethylallyl diphosphate. Arg472 contacts isopentenyl diphosphate. Residues Lys548, Thr549, Gln584, Asn591, Lys620, and Lys630 each contribute to the dimethylallyl diphosphate site.

It in the N-terminal section; belongs to the terpene synthase family. The protein in the C-terminal section; belongs to the FPP/GGPP synthase family. As to quaternary structure, hexamer. The cofactor is Mg(2+).

The enzyme catalyses isopentenyl diphosphate + (2E,6E)-farnesyl diphosphate = (2E,6E,10E)-geranylgeranyl diphosphate + diphosphate. The catalysed reaction is (2E,6E,10E)-geranylgeranyl diphosphate + H2O = (+)-penichrysol + diphosphate. The protein operates within secondary metabolite biosynthesis; terpenoid biosynthesis. In terms of biological role, bifunctional terpene synthase converts dimethylallyl diphosphate (DMAPP) and isopentenyl diphosphate (IPP) into a cyclopiane-type diterpene. The C-terminal prenyltransferase (PT) domain of PcCS catalyzes formation of geranylgeranyl pyrophosphate (GGPP), whereas the N-terminal terpene cyclase (TC) domain catalyzes the cyclization of GGPP to the cyclopiane-type diterpene penichrysol. The sequence is that of Cyclopiane-type diterpene synthase from Penicillium chrysogenum (Penicillium notatum).